Consider the following 32-residue polypeptide: U5-ctenitoxin-Pn1a (32 aa).

3 disulfide bridges follow: cysteine 3/cysteine 16, cysteine 9/cysteine 21, and cysteine 15/cysteine 30.

In terms of tissue distribution, expressed by the venom gland.

The protein localises to the secreted. Blocks voltage-gated sodium channels (Nav). Causes tail erection, scratching and a reduction in mobility at a dose level of 1.40 mg/mouse. The chain is U5-ctenitoxin-Pn1a from Phoneutria nigriventer (Brazilian armed spider).